A 97-amino-acid chain; its full sequence is Citrate lyase acyl carrier protein (97 aa).

Ser14 carries the O-(phosphoribosyl dephospho-coenzyme A)serine modification.

This sequence belongs to the CitD family. In terms of assembly, oligomer with a subunit composition of (alpha,beta,gamma)6.

The protein resides in the cytoplasm. In terms of biological role, covalent carrier of the coenzyme of citrate lyase. This is Citrate lyase acyl carrier protein from Lactobacillus helveticus (strain DPC 4571).